The chain runs to 69 residues: NAD(P)H-quinone oxidoreductase subunit O (69 aa).

It belongs to the complex I NdhO subunit family. NDH-1 can be composed of about 15 different subunits; different subcomplexes with different compositions have been identified which probably have different functions.

The protein resides in the cellular thylakoid membrane. It carries out the reaction a plastoquinone + NADH + (n+1) H(+)(in) = a plastoquinol + NAD(+) + n H(+)(out). It catalyses the reaction a plastoquinone + NADPH + (n+1) H(+)(in) = a plastoquinol + NADP(+) + n H(+)(out). In terms of biological role, NDH-1 shuttles electrons from an unknown electron donor, via FMN and iron-sulfur (Fe-S) centers, to quinones in the respiratory and/or the photosynthetic chain. The immediate electron acceptor for the enzyme in this species is believed to be plastoquinone. Couples the redox reaction to proton translocation, and thus conserves the redox energy in a proton gradient. Cyanobacterial NDH-1 also plays a role in inorganic carbon-concentration. In Acaryochloris marina (strain MBIC 11017), this protein is NAD(P)H-quinone oxidoreductase subunit O.